A 167-amino-acid chain; its full sequence is Endoribonuclease YbeY (167 aa).

3 residues coordinate Zn(2+): histidine 132, histidine 136, and histidine 142.

It belongs to the endoribonuclease YbeY family. Requires Zn(2+) as cofactor.

It is found in the cytoplasm. Its function is as follows. Single strand-specific metallo-endoribonuclease involved in late-stage 70S ribosome quality control and in maturation of the 3' terminus of the 16S rRNA. In Clostridium beijerinckii (strain ATCC 51743 / NCIMB 8052) (Clostridium acetobutylicum), this protein is Endoribonuclease YbeY.